The chain runs to 590 residues: Myo-inositol transporter 3C (590 aa).

The Cytoplasmic portion of the chain corresponds to 1-63; that stretch reads MSRTPSSLDK…GEDKVTPYLC (63 aa). The helical transmembrane segment at 64–86 threads the bilayer; sequence FLISASAIAGFLFGYDTGVVGVA. At 87–105 the chain is on the extracellular side; that stretch reads LPLVGTDLGGSVLSSSQQE. A helical transmembrane segment spans residues 106–126; sequence IITAGTTIGAIFGSAILGGWG. Over 127 to 132 the chain is Cytoplasmic; sequence DRLGRK. Residues 133–153 traverse the membrane as a helical segment; sequence VAILIADVFFTVGAVLIAASY. The Extracellular portion of the chain corresponds to 154 to 162; it reads SVPQMIVGR. Residues 163-183 traverse the membrane as a helical segment; the sequence is IVLGVGVGGAAAIAPLFITET. Over 184-192 the chain is Cytoplasmic; it reads APTAVRGRC. The chain crosses the membrane as a helical span at residues 193-213; sequence IGVNAFFIPFGQVISEAIGAG. At 214 to 222 the chain is on the extracellular side; that stretch reads VQDMKNGWR. The chain crosses the membrane as a helical span at residues 223–243; the sequence is LLFALGAVPSLFQLILFHYLP. At 244–325 the chain is on the cytoplasmic side; that stretch reads ESPRILILRG…TVSLIQMAGQ (82 aa). A helical transmembrane segment spans residues 326–346; that stretch reads LSGFNTLLYYAGTLFSLLGLT. Over 347 to 349 the chain is Extracellular; it reads NPA. Residues 350–370 form a helical membrane-spanning segment; the sequence is LGGLIPAGTNAFFVLVGMTLV. Topologically, residues 371–376 are cytoplasmic; the sequence is DKVGRR. Residues 377 to 397 traverse the membrane as a helical segment; the sequence is GLLMFGVPIMLAGLVWNIVAF. At 398–417 the chain is on the extracellular side; that stretch reads HYLCIPTGGLLDTSYKYDTK. The chain crosses the membrane as a helical span at residues 418–438; it reads LVGIVIGGIVFFTTGFGLTYS. Topologically, residues 439–454 are cytoplasmic; sequence HLAWYQSEFLALEVRS. Residues 455–475 form a helical membrane-spanning segment; sequence VGSGIATTANWVANLVVSVSY. Over 476-485 the chain is Extracellular; sequence LTELETLTPS. Residues 486 to 506 traverse the membrane as a helical segment; sequence GTYGLYLGFSVVFFIFAVFCY. Topologically, residues 507-590 are cytoplasmic; the sequence is PETKQLSIDE…NGAKRFPISR (84 aa).

This sequence belongs to the major facilitator superfamily. Sugar transporter (TC 2.A.1.1) family.

The protein resides in the cell membrane. The catalysed reaction is myo-inositol(out) + H(+)(out) = myo-inositol(in) + H(+)(in). In terms of biological role, major transporter for myo-inositol. Plays a role in the traversal of the host blood-brain barrier. The protein is Myo-inositol transporter 3C of Cryptococcus neoformans var. grubii serotype A (strain H99 / ATCC 208821 / CBS 10515 / FGSC 9487) (Filobasidiella neoformans var. grubii).